A 384-amino-acid polypeptide reads, in one-letter code: Interstitial collagenase (384 aa).

Positions 1-25 are cleaved as a signal peptide; that stretch reads MLSGLWSSILALLGVFLQSVGEFRA. A propeptide spans 26-88 (activation peptide); that stretch reads ETQEQDVEIV…STCGVPDVGE (63 aa). A Cysteine switch motif is present at residues 79-86; the sequence is STCGVPDV. Cys-81 provides a ligand contact to Zn(2+). Residues Asp-113 and Asp-129 each coordinate Ca(2+). Zn(2+)-binding residues include His-139 and Asp-141. Residues Asp-146, Gly-147, Gly-149, and Asn-151 each contribute to the Ca(2+) site. His-154 lines the Zn(2+) pocket. Residues Gly-161, Gly-163, and Asp-165 each coordinate Ca(2+). Zn(2+) is bound at residue His-167. The Ca(2+) site is built by Asp-169, Glu-170, and Glu-172. Zn(2+) is bound at residue His-189. Residue Glu-190 is part of the active site. Residues His-193 and His-199 each contribute to the Zn(2+) site. The tract at residues 218 to 239 is disordered; the sequence is LSQDDIDGPSGNPVQPRGPQTP. A disulfide bond links Cys-242 and Cys-381. Positions 249, 277, and 347 each coordinate Ca(2+). Hemopexin repeat units lie at residues 273–319 and 333–381; these read ELGL…FGFP and KQSM…WFNC.

Belongs to the peptidase M10A family. Ca(2+) is required as a cofactor. It depends on Zn(2+) as a cofactor.

The protein localises to the secreted. The protein resides in the extracellular space. Its subcellular location is the extracellular matrix. The catalysed reaction is Cleavage of the triple helix of collagen at about three-quarters of the length of the molecule from the N-terminus, at 775-Gly-|-Ile-776 in the alpha1(I) chain. Cleaves synthetic substrates and alpha-macroglobulins at bonds where P1' is a hydrophobic residue.. With respect to regulation, can be activated without removal of the activation peptide. Functionally, cleaves collagens of types I, II, and III at one site in the helical domain. Also cleaves collagens of types VII and X. In Aquarana catesbeiana (American bullfrog), this protein is Interstitial collagenase.